The following is a 189-amino-acid chain: UPF0312 protein VPA0850 (189 aa).

A signal peptide spans 1–22 (MKKSLFATGLAIAMALPLGAQA).

It belongs to the UPF0312 family. Type 1 subfamily.

It localises to the periplasm. This chain is UPF0312 protein VPA0850, found in Vibrio parahaemolyticus serotype O3:K6 (strain RIMD 2210633).